The primary structure comprises 243 residues: Peptidyl-tRNA hydrolase (243 aa).

Tyr-14 serves as a coordination point for tRNA. The Proton acceptor role is filled by His-19. The tRNA site is built by Phe-64, Asn-66, and Asn-112. The segment covering 190 to 205 has biased composition (basic and acidic residues); sequence KAEEEKPAKEMKDAGK. Positions 190–243 are disordered; sequence KAEEEKPAKEMKDAGKKPASQSHIHQARNHNQPKLPATGPMADMLKKMFGKKGD. The segment covering 208–221 has biased composition (polar residues); sequence ASQSHIHQARNHNQ.

The protein belongs to the PTH family. As to quaternary structure, monomer.

It is found in the cytoplasm. The enzyme catalyses an N-acyl-L-alpha-aminoacyl-tRNA + H2O = an N-acyl-L-amino acid + a tRNA + H(+). Hydrolyzes ribosome-free peptidyl-tRNAs (with 1 or more amino acids incorporated), which drop off the ribosome during protein synthesis, or as a result of ribosome stalling. Its function is as follows. Catalyzes the release of premature peptidyl moieties from peptidyl-tRNA molecules trapped in stalled 50S ribosomal subunits, and thus maintains levels of free tRNAs and 50S ribosomes. The polypeptide is Peptidyl-tRNA hydrolase (Rhizobium johnstonii (strain DSM 114642 / LMG 32736 / 3841) (Rhizobium leguminosarum bv. viciae)).